The sequence spans 188 residues: Probable DNA-directed RNA polymerase subunit delta (188 aa).

The HTH HARE-type domain maps to 14–83 (LSMIEVARAI…GDNKWGLRSW (70 aa)). Residues 117–188 (GDEDAIDYSD…EDDEDDEEEE (72 aa)) form a disordered region.

It belongs to the RpoE family. As to quaternary structure, RNAP is composed of a core of 2 alpha, a beta and a beta' subunits. The core is associated with a delta subunit and one of several sigma factors.

Participates in both the initiation and recycling phases of transcription. In the presence of the delta subunit, RNAP displays an increased specificity of transcription, a decreased affinity for nucleic acids, and an increased efficiency of RNA synthesis because of enhanced recycling. The protein is Probable DNA-directed RNA polymerase subunit delta of Streptococcus uberis (strain ATCC BAA-854 / 0140J).